The following is a 3119-amino-acid chain: Huntingtin (3119 aa).

The disordered stretch occupies residues 1 to 65 (MATLEKLMKA…LPGPAEEPLH (65 aa)). At Lys9 the chain carries N6-acetyllysine. A compositionally biased stretch (pro residues) spans 24 to 60 (QPPPQAPPPPPPPPPQPPQPPPQGQPPPPPPPLPGPA). An N6-acetyllysine mark is found at Lys155 and Lys213. HEAT repeat units lie at residues 183 to 220 (PYLV…SFGN) and 225 to 262 (NEIK…HSRR). Residue Lys322 is modified to N6-acetyllysine. Residues Ser396, Ser398, and Ser411 each carry the phosphoserine modification. Residue Lys421 is modified to N6-acetyllysine. An interaction with ZDHHC17 region spans residues 470-481 (GHDIITEQPRSQ). The disordered stretch occupies residues 495 to 558 (DLTSAATDGD…DSAVTPSDSS (64 aa)). A compositionally biased stretch (polar residues) spans 529–558 (DGTQASSPISDSSQTTTEGPDSAVTPSDSS). Gly530 carries the N-myristoyl glycine lipid modification. Ser620 and Ser623 each carry phosphoserine. 2 HEAT repeats span residues 782–819 (FSLV…SLCS) and 882–920 (KLQE…KLFY). A disordered region spans residues 1146–1204 (KAALPSLTNPPSLSPIRRKGKEKEPGEQASTPMSPKKVGEASAASRQSDTSGPVTASKS). Residues 1149 to 1160 (LPSLTNPPSLSP) show a composition bias toward low complexity. 2 positions are modified to phosphoserine; by CDK5: Ser1159 and Ser1179. The span at 1189–1204 (ASRQSDTSGPVTASKS) shows a compositional bias: polar residues. Residues 1404-1441 (LFEPLVIKALKQYTTTTSVQLQKQVLDLLAQLVQLRVN) form an HEAT 5 repeat. Ser1853 is subject to Phosphoserine. The Nuclear export signal motif lies at 2372-2381 (IVISLARLPL). Residues 2610-2637 (EEEWDEEEEEESDVPAPTSPPVSPVNSR) are disordered. Positions 2611 to 2622 (EEWDEEEEEESD) are enriched in acidic residues.

This sequence belongs to the huntingtin family. Interacts with PFN1. Interacts through its N-terminus with PRPF40A. Interacts with PQBP1. Interacts with SETD2. Interacts with SH3GLB1. Interacts with SYVN. Interacts with TPR; the interaction is inhibited by forms of Huntingtin with expanded polyglutamine stretch. Interacts with ZDHHC13 (via ANK repeats). Interacts with ZDHHC17 (via ANK repeats). Interacts with F8A1/F8A2/F8A3. Found in a complex with F8A1/F8A2/F8A3, HTT and RAB5A; mediates the recruitment of HTT by RAB5A. In terms of processing, phosphorylation at Ser-1159 and Ser-1179 by CDK5 in response to DNA damage in nuclei of neurons protects neurons against polyglutamine expansion as well as DNA damage mediated toxicity. Cleaved by caspases downstream of the polyglutamine stretch. Post-translationally, myristoylated at Gly-530, following proteolytic cleavage at Asp-529. In terms of tissue distribution, the highest level is seen throughout the brain, but it is also found in the stomach, heart, testis, adipose tissue, muscle, spleen, liver, and kidney.

The protein localises to the cytoplasm. It is found in the nucleus. It localises to the cytoplasmic vesicle. Its subcellular location is the autophagosome. In terms of biological role, may play a role in microtubule-mediated transport or vesicle function. Promotes the formation of autophagic vesicles. The protein is Huntingtin (Htt) of Mus musculus (Mouse).